The sequence spans 359 residues: PWWP domain-containing protein 1 (359 aa).

Residues 1–37 (MNNARTNAKRRRLSSKQGGLSISEGKESNIPSVVEES) form a disordered region. In terms of domain architecture, PWWP spans 52-114 (FGDRILVKAP…RNSVKPLLDS (63 aa)). Disordered regions lie at residues 133-161 (AYEA…AAEE) and 204-255 (VAST…SPLN). A compositionally biased stretch (polar residues) spans 204–224 (VASTSRSSTQLSDQRYPLSSN). The residue at position 252 (S252) is a Phosphoserine.

In terms of assembly, interacts with set9 and histone H4K20me1. Associates with nucleosomes.

Its subcellular location is the nucleus. Functionally, necessary for DNA damage checkpoint activation. Required for the association of set9 with chromatin and subsequent methylation of H4K20. Associates with H4K20me1 to increase the concentration of set9 on chromatin to perform H4K20me3. H4K20me3 is mainly enriched at heterochromatin and is required for proper heterochromatin assembly. This is PWWP domain-containing protein 1 (pdp1) from Schizosaccharomyces pombe (strain 972 / ATCC 24843) (Fission yeast).